A 166-amino-acid polypeptide reads, in one-letter code: Ribonuclease H2 subunit C (166 aa).

N-acetylmethionine is present on Met1.

It belongs to the RNase H2 subunit C family. In terms of assembly, the RNase H2 complex is a heterotrimer composed of the catalytic subunit RNASEH2A and the non-catalytic subunits RNASEH2B and RNASEH2C.

The protein localises to the nucleus. Non catalytic subunit of RNase H2, an endonuclease that specifically degrades the RNA of RNA:DNA hybrids. Participates in DNA replication, possibly by mediating the removal of lagging-strand Okazaki fragment RNA primers during DNA replication. Mediates the excision of single ribonucleotides from DNA:RNA duplexes. In Mus musculus (Mouse), this protein is Ribonuclease H2 subunit C (Rnaseh2c).